The chain runs to 85 residues: Large ribosomal subunit protein bL27 (85 aa).

Positions 1–21 are disordered; the sequence is MAHKKGVGSSRNGRDSDGQRL.

The protein belongs to the bacterial ribosomal protein bL27 family.

This is Large ribosomal subunit protein bL27 from Citrifermentans bemidjiense (strain ATCC BAA-1014 / DSM 16622 / JCM 12645 / Bem) (Geobacter bemidjiensis).